A 106-amino-acid chain; its full sequence is DNA-directed RNA polymerase subunit omega (106 aa).

Positions 76 to 106 (REPAREAAEPAGEAPEEQQRAAGEREDQGAA) are disordered. The segment covering 92 to 106 (EQQRAAGEREDQGAA) has biased composition (basic and acidic residues).

Belongs to the RNA polymerase subunit omega family. In terms of assembly, the RNAP catalytic core consists of 2 alpha, 1 beta, 1 beta' and 1 omega subunit. When a sigma factor is associated with the core the holoenzyme is formed, which can initiate transcription.

The catalysed reaction is RNA(n) + a ribonucleoside 5'-triphosphate = RNA(n+1) + diphosphate. Functionally, promotes RNA polymerase assembly. Latches the N- and C-terminal regions of the beta' subunit thereby facilitating its interaction with the beta and alpha subunits. This Rubrobacter xylanophilus (strain DSM 9941 / JCM 11954 / NBRC 16129 / PRD-1) protein is DNA-directed RNA polymerase subunit omega.